Consider the following 125-residue polypeptide: MAESLYAFIDSPGGIAPVQEGTSNRYTFFCPESFHIPPHGVVLLHLKVSVLVPTGYQGRFMALNDYHARDILTQSDVIFAGRRQELTVLLFNHTDRFLYVRKGHPVGTLLLERVIFPSVKIATLV.

The short motif at 122–125 (ATLV) is the PDZ-binding element.

Belongs to the dUTPase family. In terms of assembly, binds to human MPDZ.

It is found in the host cytoplasm. The enzyme catalyses dUTP + H2O = dUMP + diphosphate + H(+). Its function is as follows. Plays a key role in virus oncogenecity in animals. Binds and sequesters human MUPP1/MPDZ protein in the cytoplasm, preventing it from playing a role in cellular proliferation regulation. Induces cell transformation, probably by inactivating MPDZ protein. The polypeptide is E4-ORF1 (E4) (Homo sapiens (Human)).